Here is a 766-residue protein sequence, read N- to C-terminus: Serine/threonine-protein kinase tousled-like 1 (766 aa).

The disordered stretch occupies residues 1–198 (MSVQSSSGSL…PSPTALAFGD (198 aa)). The segment covering 20-33 (STSPTPGSAAAARS) has biased composition (low complexity). Threonine 38 is subject to Phosphothreonine. The span at 43–64 (RPREGAMDELHSLDPRRQELLE) shows a compositional bias: basic and acidic residues. Serine 54, serine 77, and serine 80 each carry phosphoserine. Residues 68–85 (TGVATGSTGSTGSCSVGA) show a composition bias toward low complexity. The span at 87–103 (ASTNNESSNHSFGSLGS) shows a compositional bias: polar residues. Basic and acidic residues predominate over residues 105 to 121 (SDKESETPEKKQSESSR). Phosphoserine is present on residues serine 134, serine 159, serine 174, and serine 176. Over residues 170-192 (SPQNSHSHSTPSSSVRPNSPSPT) the composition is skewed to low complexity. A coiled-coil region spans residues 229–280 (NQDLEKKEGRIDDLLRANCDLRRQIDDQQKLLEKYKERLNKCISMSKKLLIE). The segment at 344–381 (KLLGKRKPPTANNSQAPATNSEAKQRKTKAVNGAENDP) is disordered. Over residues 353–365 (TANNSQAPATNSE) the composition is skewed to polar residues. The stretch at 397–445 (HEQEEIFKLRLGHLKKEEAEIQAELERLERVRNLHIRELKRINNEDNSQ) forms a coiled coil. The Protein kinase domain maps to 456-734 (YLLLHLLGRG…VHQLANDPYL (279 aa)). Residues 462-470 (LGRGGFSEV) and lysine 485 each bind ATP. Residue aspartate 586 is the Proton acceptor of the active site. Serine 743 carries the post-translational modification Phosphoserine. A disordered region spans residues 745-766 (GNLHMSGLTATPTPPSSSIITY).

It belongs to the protein kinase superfamily. Ser/Thr protein kinase family. Heterodimer with TLK2. Mg(2+) serves as cofactor. Ubiquitously expressed in all tissues examined.

Its subcellular location is the nucleus. It carries out the reaction L-seryl-[protein] + ATP = O-phospho-L-seryl-[protein] + ADP + H(+). It catalyses the reaction L-threonyl-[protein] + ATP = O-phospho-L-threonyl-[protein] + ADP + H(+). Its activity is regulated as follows. Cell-cycle regulated, maximal activity in S-phase. Inactivated by phosphorylation at Ser-743, potentially by CHEK1. Rapidly and transiently inhibited by phosphorylation following the generation of DNA double-stranded breaks during S-phase. This is cell cycle checkpoint and ATM-pathway dependent and appears to regulate processes involved in chromatin assembly. Isoform 3 protects the cells from the ionizing radiation by facilitating the repair of DSBs. In vitro, phosphorylates histone H3 at 'Ser-10'. The protein is Serine/threonine-protein kinase tousled-like 1 (Tlk1) of Mus musculus (Mouse).